The primary structure comprises 485 residues: Rhamnulokinase (485 aa).

Residue Ala11–Arg15 participates in ATP binding. Substrate-binding positions include Ala79 and His234–Thr236. Residue Asp235 is the Proton acceptor of the active site. Position 257 (Thr257) interacts with ATP. Asn294 provides a ligand contact to substrate. ATP-binding residues include Gln302 and Gly401.

This sequence belongs to the rhamnulokinase family. Mg(2+) serves as cofactor.

It carries out the reaction L-rhamnulose + ATP = L-rhamnulose 1-phosphate + ADP + H(+). It functions in the pathway carbohydrate degradation; L-rhamnose degradation; glycerone phosphate from L-rhamnose: step 2/3. In terms of biological role, involved in the catabolism of L-rhamnose (6-deoxy-L-mannose). Catalyzes the transfer of the gamma-phosphate group from ATP to the 1-hydroxyl group of L-rhamnulose to yield L-rhamnulose 1-phosphate. This chain is Rhamnulokinase, found in Ligilactobacillus salivarius (strain UCC118) (Lactobacillus salivarius).